Reading from the N-terminus, the 219-residue chain is Small ribosomal subunit protein uS3c (219 aa).

The KH type-2 domain maps to 47–118; sequence IKKNIRISSG…KINIAITRIT (72 aa).

Belongs to the universal ribosomal protein uS3 family. As to quaternary structure, part of the 30S ribosomal subunit.

The protein resides in the plastid. The protein localises to the chloroplast. This Citrus sinensis (Sweet orange) protein is Small ribosomal subunit protein uS3c (rps3).